We begin with the raw amino-acid sequence, 297 residues long: MPDASDADLLDGQALSQAVRDEVKADIQAWTDDHRPPFLSAVLVGDNPASKAYVRGKEKDAAEVGIETETHHLDADTSQSELLDLVHDLNADASVDGILVQLPLPDHVDERTVIDAVDPSKDVDGFHPENLGRLMRGTPRYIPATPYGIMEMLSRSDIDPESMDAVIVGRSNIVGKPLANLLLRRTANATVTVCHSRTKDLAAHTRRADLLVAAAGQAAFIDADMVKEDAVVIDVGINRVDDPSTDRGYRLVGDVDFEGVRPKARRITPVPGGVGLMTRAMLLKNTLKAARLRATSA.

NADP(+) is bound by residues 169–171 (GRS), S196, and I237.

It belongs to the tetrahydrofolate dehydrogenase/cyclohydrolase family. Homodimer.

The catalysed reaction is (6R)-5,10-methylene-5,6,7,8-tetrahydrofolate + NADP(+) = (6R)-5,10-methenyltetrahydrofolate + NADPH. The enzyme catalyses (6R)-5,10-methenyltetrahydrofolate + H2O = (6R)-10-formyltetrahydrofolate + H(+). Its pathway is one-carbon metabolism; tetrahydrofolate interconversion. Catalyzes the oxidation of 5,10-methylenetetrahydrofolate to 5,10-methenyltetrahydrofolate and then the hydrolysis of 5,10-methenyltetrahydrofolate to 10-formyltetrahydrofolate. This Salinibacter ruber (strain DSM 13855 / M31) protein is Bifunctional protein FolD.